The sequence spans 512 residues: Protein SHC1 (512 aa).

The span at 101 to 113 (EQDEFENDVEDDA) shows a compositional bias: acidic residues. 2 disordered regions span residues 101 to 122 (EQDE…EKSQ) and 144 to 164 (DGNS…ESVA). Sel1-like repeat units follow at residues 318–353 (PDAQ…KRMH), 354–389 (IESV…TKNH), 390–429 (PAAM…SMAS), and 433–470 (CGAP…ALGH).

It belongs to the SKT5 family.

It is found in the cytoplasm. Its subcellular location is the cytoplasmic granule membrane. In terms of biological role, required for the activation of chitin synthase III (CHS3) activity during the sporulation process. The protein is Protein SHC1 (SHC1) of Saccharomyces cerevisiae (strain ATCC 204508 / S288c) (Baker's yeast).